A 519-amino-acid chain; its full sequence is S-type anion channel SLAH2 (519 aa).

Residues 1-31 are disordered; it reads MNNPRSVSPLVSPANHSDLLENQRQSGSGDF. Residues 1 to 140 are Cytoplasmic-facing; that stretch reads MNNPRSVSPL…LPEDKTWPFL (140 aa). Residues 20 to 29 are compositionally biased toward polar residues; it reads LENQRQSGSG. Residues Ser-77 and Ser-85 each carry the phosphoserine modification. The chain crosses the membrane as a helical span at residues 141 to 161; that stretch reads LRFPITSYGMCLGVSSQAIMW. The Extracellular portion of the chain corresponds to 162 to 185; sequence KTLATTEAEKFLHVTQVINHVLWW. A helical membrane pass occupies residues 186–206; that stretch reads ISLLLLLAVSITYLFKTILFF. Residues 207–220 lie on the Cytoplasmic side of the membrane; the sequence is EAVRREFRHPIRVN. The chain crosses the membrane as a helical span at residues 221–241; sequence FFFAPLISILFLALGIPHSII. The Extracellular segment spans residues 242–247; sequence SHLPST. Residues 248-268 form a helical membrane-spanning segment; the sequence is LWYFLMAPILFLEMKIYGQWM. Over 269–281 the chain is Cytoplasmic; that stretch reads SGGQRRLSKVANP. A helical membrane pass occupies residues 282–302; that stretch reads TNHLSIVGNFAGALLGASMGL. Residues 303-304 lie on the Extracellular side of the membrane; it reads KE. The helical transmembrane segment at 305-325 threads the bilayer; that stretch reads GPIFFFAIGLAYYLVLFVTLY. Residues 326–340 lie on the Cytoplasmic side of the membrane; that stretch reads QRLPTNETLPKELHP. The helical transmembrane segment at 341–361 threads the bilayer; sequence VFFLFVAAPAVASMAWTKISA. Position 362 (Ser-362) is a topological domain, extracellular. Residues 363-383 form a helical membrane-spanning segment; the sequence is FDLGSRLAYFISLFLYFSLVC. Topologically, residues 384-389 are cytoplasmic; it reads RINLFR. A helical transmembrane segment spans residues 390–410; that stretch reads GFKFSLAWWAYTFPMTAVASA. At 411 to 424 the chain is on the extracellular side; sequence TIKYSDEVTGVATK. The chain crosses the membrane as a helical span at residues 425-445; the sequence is ILSVVMSGAATLTVIAVLGLT. The Cytoplasmic segment spans residues 446-519; the sequence is VMHAFVQRDL…VDSSTVQNSN (74 aa). The segment at 495–519 is disordered; the sequence is PEDNQIDLESPPLVNVDSSTVQNSN. Residues 510 to 519 show a composition bias toward polar residues; sequence VDSSTVQNSN.

Belongs to the SLAC1 S-type anion channel family. In terms of assembly, homotrimer. In terms of tissue distribution, expressed in lateral root primordia and tap root tips.

Its subcellular location is the cell membrane. In terms of biological role, slow, weak voltage-dependent S-type anion efflux channel involved in maintenance of anion homeostasis. This chain is S-type anion channel SLAH2 (SLAH2), found in Arabidopsis thaliana (Mouse-ear cress).